The primary structure comprises 66 residues: DNA-directed RNA polymerase subunit Rpo10 (66 aa).

Zn(2+)-binding residues include C7, C10, C44, and C45.

This sequence belongs to the archaeal Rpo10/eukaryotic RPB10 RNA polymerase subunit family. In terms of assembly, part of the RNA polymerase complex. Zn(2+) serves as cofactor.

The protein resides in the cytoplasm. The catalysed reaction is RNA(n) + a ribonucleoside 5'-triphosphate = RNA(n+1) + diphosphate. Its function is as follows. DNA-dependent RNA polymerase (RNAP) catalyzes the transcription of DNA into RNA using the four ribonucleoside triphosphates as substrates. In Pyrobaculum aerophilum (strain ATCC 51768 / DSM 7523 / JCM 9630 / CIP 104966 / NBRC 100827 / IM2), this protein is DNA-directed RNA polymerase subunit Rpo10.